Here is a 130-residue protein sequence, read N- to C-terminus: Vascular-related unknown protein 3 (130 aa).

Positions 45–81 (DDSSMMSDAASPMGCVEEDTASSPSNRTEGYSGMEDN) are disordered.

Involved in the regulation of plant growth. This is Vascular-related unknown protein 3 from Arabidopsis thaliana (Mouse-ear cress).